Here is a 451-residue protein sequence, read N- to C-terminus: Crh-like protein 2 (451 aa).

An N-terminal signal peptide occupies residues 1 to 21 (MQFNSLVLLAGATILSPFVQA). One can recognise a GH16 domain in the interval 22–241 (QTWTTCNPLN…FTKVPFTMYV (220 aa)). The cysteines at positions 27 and 34 are disulfide-linked. 4 N-linked (GlcNAc...) asparagine glycosylation sites follow: Asn31, Asn43, Asn49, and Asn59. The active-site Nucleophile is Glu121. Glu125 acts as the Proton donor in catalysis. Glu125 provides a ligand contact to chitin. N-linked (GlcNAc...) asparagine glycans are attached at residues Asn130, Asn143, and Asn165. Positions 206, 210, and 222 each coordinate chitin. A glycan (N-linked (GlcNAc...) asparagine) is linked at Asn273. A helical membrane pass occupies residues 305–325 (VYCGGGAAVAALVSAFLFTFL). Asn366 is a glycosylation site (N-linked (GlcNAc...) asparagine).

This sequence belongs to the glycosyl hydrolase 16 family. CRH1 subfamily. In terms of assembly, forms homodimers as well as heterodimers with other crh protein members crh1 and crh3. Dimerization may be necessary for the transglycosylation activity.

It localises to the membrane. It catalyses the reaction Random endo-hydrolysis of N-acetyl-beta-D-glucosaminide (1-&gt;4)-beta-linkages in chitin and chitodextrins.. Its function is as follows. Dual chitinase/transglycosylase that plays a role in cell wall architecture. Chitinase and transglycosylase activities are coupled. Required for the polysaccharide cross-linking at the septa and the cell wall. More specifically, transfers chitin to 1,6-beta-glucan in the cell wall. This chain is Crh-like protein 2, found in Botryotinia fuckeliana (strain B05.10) (Noble rot fungus).